The chain runs to 787 residues: Probable phosphoketolase (787 aa).

It belongs to the XFP family. Requires thiamine diphosphate as cofactor.

The protein is Probable phosphoketolase of Pediococcus pentosaceus (strain ATCC 25745 / CCUG 21536 / LMG 10740 / 183-1w).